Reading from the N-terminus, the 508-residue chain is MFS-type transporter penM (508 aa).

A disordered region spans residues 1 to 60 (MKDGEETPSVDGSTSASNREKLGTDLEIGPVDLSDGGKEEKVKDPNLVDWDGPDDPENPL). Basic and acidic residues predominate over residues 35–46 (DGGKEEKVKDPN). N-linked (GlcNAc...) asparagine glycosylation is present at Asn61. The chain crosses the membrane as a helical span at residues 73–93 (SIALITFLTPLGSSMFAPGVG). A glycan (N-linked (GlcNAc...) asparagine) is linked at Asn100. 6 helical membrane-spanning segments follow: residues 108 to 128 (SFVV…IAPL), 143 to 163 (ILYV…SLVV), 166 to 186 (FFAG…IADM), 197 to 217 (AAWA…GAYL), 225 to 245 (WSFY…LFSI), and 299 to 319 (PIVF…YLLF). The short motif at 293–307 (KMLFRSPIVFLLSLY) is the Peroxisomal targeting signal element. N-linked (GlcNAc...) asparagine glycosylation occurs at Asn331. A run of 5 helical transmembrane segments spans residues 335 to 355 (GAVG…LFLI), 379 to 399 (LPPM…YGWT), 407 to 427 (IVPI…FMCV), 435 to 457 (FTNY…GALL), and 475 to 495 (SLLG…WIYG).

It belongs to the major facilitator superfamily.

The protein localises to the peroxisome membrane. Its function is as follows. MFS-type transporter involved in penicillin production, most likely through the translocation of isopenicillin N from the cytosol to the peroxisomal lumen across the peroxisomal membrane. The polypeptide is MFS-type transporter penM (Penicillium rubens (strain ATCC 28089 / DSM 1075 / NRRL 1951 / Wisconsin 54-1255) (Penicillium chrysogenum)).